Consider the following 783-residue polypeptide: Galactinol--sucrose galactosyltransferase (783 aa).

It belongs to the glycosyl hydrolases 36 family.

It carries out the reaction alpha-D-galactosyl-(1-&gt;3)-1D-myo-inositol + sucrose = raffinose + myo-inositol. Its activity is regulated as follows. Inhibited by Ag(2)+, Hg(2+), Zn(2+), p-chloromercuribenzoate (pCMB) and 1-deoxygalactonojirimycin. Transglycosidase operating by a ping-pong reaction mechanism. Involved in the synthesis of raffinose, a major soluble carbohydrate in seeds, roots and tubers. Specific for galactinol and p-nitrophenyl-alpha-D-galactoside as galactosyl donors. Able to utilize sucrose, lactose, 4-beta-galactobiose, N-acetyl-D-lactosamine, trehalose and lacto-N-biose as acceptors. May also act as a glycoside hydrolase. This Oryza sativa subsp. japonica (Rice) protein is Galactinol--sucrose galactosyltransferase (RFS).